Here is a 204-residue protein sequence, read N- to C-terminus: DNA-directed RNA polymerase subunit gamma (204 aa).

Positions 34, 36, 49, and 52 each coordinate Zn(2+).

The protein belongs to the RNA polymerase beta' chain family. RpoC1 subfamily. In terms of assembly, in cyanobacteria the RNAP catalytic core is composed of 2 alpha, 1 beta, 1 beta', 1 gamma and 1 omega subunit. When a sigma factor is associated with the core the holoenzyme is formed, which can initiate transcription. Zn(2+) serves as cofactor.

The enzyme catalyses RNA(n) + a ribonucleoside 5'-triphosphate = RNA(n+1) + diphosphate. In terms of biological role, DNA-dependent RNA polymerase catalyzes the transcription of DNA into RNA using the four ribonucleoside triphosphates as substrates. The protein is DNA-directed RNA polymerase subunit gamma (rpoC1) of Prochlorococcus marinus (strain DV1).